Reading from the N-terminus, the 325-residue chain is Phospholipid phosphatase-related protein type 1 (325 aa).

A glycan (N-linked (GlcNAc...) asparagine) is linked at Asn-5. 3 helical membrane-spanning segments follow: residues 13-33 (IIPC…LLAY), 67-87 (FISP…IIFI), and 127-147 (FIGV…AGQV). The N-linked (GlcNAc...) asparagine glycan is linked to Asn-163. 3 consecutive transmembrane segments (helical) span residues 201 to 218 (AALS…ITST), 230 to 247 (VLCL…LNRV), and 257 to 277 (VIAG…CVVH). Ser-307 is subject to Phosphoserine. Residue Asn-316 is glycosylated (N-linked (GlcNAc...) asparagine).

It belongs to the PA-phosphatase related phosphoesterase family.

Its subcellular location is the cell membrane. The protein resides in the cell projection. The protein localises to the neuron projection. Its function is as follows. May play a role in neurite outgrowth and neurogenesis. The polypeptide is Phospholipid phosphatase-related protein type 1 (Mus musculus (Mouse)).